The following is a 110-amino-acid chain: Ig kappa chain V region 3547 (110 aa).

The framework-1 stretch occupies residues 1-23 (AYDMTQTPSSVSAAVGGTVTINC). A complementarity-determining-1 region spans residues 24–34 (QASEDISANLA). A framework-2 region spans residues 35–49 (WYQQKPGQPPKLLIY). The segment at 50–56 (AASDLAS) is complementarity-determining-2. A framework-3 region spans residues 57 to 88 (GVPSRFKGSGSGTEYTLTISGVQCADAATYYC). Positions 89–99 (QSADYSGSAVT) are complementarity-determining-3. The framework-4 stretch occupies residues 100–109 (FGGGTEVVVK).

This is Ig kappa chain V region 3547 from Oryctolagus cuniculus (Rabbit).